Reading from the N-terminus, the 105-residue chain is uncharacterized protein (105 aa).

The protein resides in the cytoplasm. It localises to the nucleus. This is an uncharacterized protein from Schizosaccharomyces pombe (strain 972 / ATCC 24843) (Fission yeast).